An 80-amino-acid chain; its full sequence is Large ribosomal subunit protein uL24 (80 aa).

Residues H53–S80 are disordered.

Belongs to the universal ribosomal protein uL24 family. As to quaternary structure, part of the 50S ribosomal subunit.

One of two assembly initiator proteins, it binds directly to the 5'-end of the 23S rRNA, where it nucleates assembly of the 50S subunit. Its function is as follows. One of the proteins that surrounds the polypeptide exit tunnel on the outside of the subunit. In Chlorobium limicola (strain DSM 245 / NBRC 103803 / 6330), this protein is Large ribosomal subunit protein uL24.